The chain runs to 408 residues: Cell division protein FtsZ 2 (408 aa).

GTP is bound by residues 130–132 (GTG), Glu-169, Arg-173, and Asp-216.

It belongs to the FtsZ family. In terms of assembly, homodimer. Polymerizes to form a dynamic ring structure in a strictly GTP-dependent manner. Interacts directly with several other division proteins.

It is found in the cytoplasm. In terms of biological role, essential cell division protein that forms a contractile ring structure (Z ring) at the future cell division site. The regulation of the ring assembly controls the timing and the location of cell division. One of the functions of the FtsZ ring is to recruit other cell division proteins to the septum to produce a new cell wall between the dividing cells. Binds GTP and shows GTPase activity. The sequence is that of Cell division protein FtsZ 2 from Pyrococcus furiosus (strain ATCC 43587 / DSM 3638 / JCM 8422 / Vc1).